The following is a 294-amino-acid chain: MFKGSIVALITPMDEKGQICRISLEKLINYHIASKTEAIVSIGTTGESATLSQEEHINIVMLTLELADGRIPVIAGTGANATTEAISLTKRFEKSGVAGCLSVTPYYNRPTQEGLYQHFKAISENTELPQILYNVPSRTGCDLLPETVAKLSHFNNIIGIKEATGDLSRIHKIKELVKTNFLLISGDDATALDFMQLGGQGVISVTANIAAKEMMEICSYALKGDFINARSINKRLMLLHEALFIEPNPIPVKWLAKKIGLIKSDTLRLPMTPVLDSTRFQLEKAIQYANLKIS.

Pyruvate is bound at residue threonine 45. Catalysis depends on tyrosine 133, which acts as the Proton donor/acceptor. Lysine 161 serves as the catalytic Schiff-base intermediate with substrate. Isoleucine 203 serves as a coordination point for pyruvate.

It belongs to the DapA family. As to quaternary structure, homotetramer; dimer of dimers.

Its subcellular location is the cytoplasm. It catalyses the reaction L-aspartate 4-semialdehyde + pyruvate = (2S,4S)-4-hydroxy-2,3,4,5-tetrahydrodipicolinate + H2O + H(+). The protein operates within amino-acid biosynthesis; L-lysine biosynthesis via DAP pathway; (S)-tetrahydrodipicolinate from L-aspartate: step 3/4. Its function is as follows. Catalyzes the condensation of (S)-aspartate-beta-semialdehyde [(S)-ASA] and pyruvate to 4-hydroxy-tetrahydrodipicolinate (HTPA). This is 4-hydroxy-tetrahydrodipicolinate synthase from Buchnera aphidicola subsp. Acyrthosiphon pisum (strain 5A).